The sequence spans 347 residues: MDSFFSTYVLPAIIMIGQSLLLLVCLLVFIAYVLLADRKIWAAVQLRRGPNVVGPFGLFQSFADLLKFVFKEPIIPAGANKAVFLLAPLVTVLLALSTWAVVPLADGWVIANINVGILYIFAISSLEVYGIIMGGWASNSKYPFLGALRSAAQMVSYEVSIGFVIVTVLLCVGSLNLTDIVNAQHTGLGTMLGLPASFLDWHWLSLFPMFIIFFISALAETNRPPFDLPEAESELVAGFMVEYGSSPYMMFMLGEYAAVCLMCSLTTILFLGGWLPPVDIWILNWVPGIIWFMLKACFVFFMFAMVKAFVPRYRYDQLMRLGWKVFLPLSLAMVIIVAFVLKLMGWA.

9 helical membrane passes run 13–33, 50–70, 82–102, 115–135, 161–181, 198–218, 263–283, 286–306, and 321–341; these read IIMI…IAYV, PNVV…KFVF, AVFL…WAVV, VGIL…IMGG, IGFV…TDIV, FLDW…ISAL, CSLT…IWIL, VPGI…FAMV, and LGWK…AFVL.

Belongs to the complex I subunit 1 family. As to quaternary structure, NDH-1 is composed of 14 different subunits. Subunits NuoA, H, J, K, L, M, N constitute the membrane sector of the complex.

Its subcellular location is the cell inner membrane. The enzyme catalyses a quinone + NADH + 5 H(+)(in) = a quinol + NAD(+) + 4 H(+)(out). Its function is as follows. NDH-1 shuttles electrons from NADH, via FMN and iron-sulfur (Fe-S) centers, to quinones in the respiratory chain. The immediate electron acceptor for the enzyme in this species is believed to be ubiquinone. Couples the redox reaction to proton translocation (for every two electrons transferred, four hydrogen ions are translocated across the cytoplasmic membrane), and thus conserves the redox energy in a proton gradient. This subunit may bind ubiquinone. The chain is NADH-quinone oxidoreductase subunit H from Rhizobium leguminosarum bv. trifolii (strain WSM2304).